Reading from the N-terminus, the 483-residue chain is Cysteine--tRNA ligase (483 aa).

A Zn(2+)-binding site is contributed by cysteine 27. Residues 29–39 (ITAYDYCHIGH) carry the 'HIGH' region motif. Zn(2+)-binding residues include cysteine 208, histidine 231, and glutamate 235. A 'KMSKS' region motif is present at residues 263-267 (KMSKS). Position 266 (lysine 266) interacts with ATP.

Belongs to the class-I aminoacyl-tRNA synthetase family. Monomer. The cofactor is Zn(2+).

It is found in the cytoplasm. The catalysed reaction is tRNA(Cys) + L-cysteine + ATP = L-cysteinyl-tRNA(Cys) + AMP + diphosphate. This is Cysteine--tRNA ligase from Desulfovibrio desulfuricans (strain ATCC 27774 / DSM 6949 / MB).